A 394-amino-acid polypeptide reads, in one-letter code: Protein BUR2 (394 aa).

Disordered regions lie at residues 1-32 and 372-394; these read MVLS…GNPQ and MSER…KPRF. Residues 9–32 are compositionally biased toward polar residues; sequence IANSQPSGNGKTSLDIKQNEGNPQ. Basic and acidic residues predominate over residues 372 to 381; it reads MSERSIKRPS.

In terms of assembly, belongs to the BUR kinase complex.

It localises to the nucleus. Component of the BUR kinase complex involved in transcription regulation. This complex phosphorylates the UBC2/RAD6 ubiquitin-conjugating enzyme (E2), leading to monoubiquitination of histone H2B and the silencing of telomeric-associated genes. Also required for histone H3 methylation. Necessary for the recovery from pheromone-induced growth arrest in the cell cycle G1 phase. The kinase activity of the complex requires the presence of BUR2. Overexpression of BUR2 interferes with mitotic chromosome segregation. The protein is Protein BUR2 (BUR2) of Kluyveromyces lactis (strain ATCC 8585 / CBS 2359 / DSM 70799 / NBRC 1267 / NRRL Y-1140 / WM37) (Yeast).